Consider the following 30-residue polypeptide: Chassatide C9 (30 aa).

A cross-link (cyclopeptide (Gly-Asn)) is located at residues 1 to 30 (GIPCGESCVFIPCVTTVIGCSCKDKVCYNN). 3 disulfide bridges follow: cysteine 4/cysteine 20, cysteine 8/cysteine 22, and cysteine 13/cysteine 27.

This is a cyclic peptide.

In terms of biological role, probably participates in a plant defense mechanism. The protein is Chassatide C9 of Chassalia chartacea (Chassalia curviflora).